A 748-amino-acid chain; its full sequence is Polyribonucleotide nucleotidyltransferase (748 aa).

The Mg(2+) site is built by D487 and D493. The region spanning 554–613 is the KH domain; the sequence is PSTTTIKIDKDKIRDIIGPGGKVIKEICETSGAKIDISDDGTVSVYASDRDKLKVALDKI. One can recognise an S1 motif domain in the interval 623–691; the sequence is GEIFNGTVVK…NKGKAKLTIK (69 aa). Positions 691–748 are disordered; that stretch reads KNADKDKSSNNTKPKTNVNNTKDNSEPEQRRDSSKKRAWNEDNNAETAEVITERKYFN. A compositionally biased stretch (low complexity) spans 699-712; sequence SNNTKPKTNVNNTK. The segment covering 713–722 has biased composition (basic and acidic residues); sequence DNSEPEQRRD.

This sequence belongs to the polyribonucleotide nucleotidyltransferase family. Requires Mg(2+) as cofactor.

Its subcellular location is the cytoplasm. It carries out the reaction RNA(n+1) + phosphate = RNA(n) + a ribonucleoside 5'-diphosphate. Its function is as follows. Involved in mRNA degradation. Catalyzes the phosphorolysis of single-stranded polyribonucleotides processively in the 3'- to 5'-direction. The chain is Polyribonucleotide nucleotidyltransferase from Rickettsia africae (strain ESF-5).